The chain runs to 568 residues: TWiK family of potassium channels protein 9 (568 aa).

Topologically, residues 1-15 (MKCSFHIPEKYQWAS) are cytoplasmic. A helical transmembrane segment spans residues 16–36 (TLFVHVALIAGVAVYTVFGAL). The segment at residues 163–183 (IGNSVIFAFTVITTIGYGHVA) is an intramembrane region (pore-forming). The helical transmembrane segment at 191-211 (LFLIFYGVIGVPFTLLTIADL) threads the bilayer. Residues 212–316 (GMFLTRFLKN…NNEPRKTEES (105 aa)) are Cytoplasmic-facing. Disordered regions lie at residues 243 to 262 (QRNK…RSEV) and 274 to 314 (MRTA…RKTE). The span at 297-307 (GKEEDEEEPEN) shows a compositional bias: acidic residues. A helical membrane pass occupies residues 317–337 (IALGITFTCYLVAGAKILSVY). The segment at residues 343–363 (FFKALYFNFVTLTTIGLGDFV) is an intramembrane region (pore-forming). A helical membrane pass occupies residues 370–390 (LLITLIYIGIGLALTTMAIEI). The Cytoplasmic portion of the chain corresponds to 391 to 568 (AADLLKKLHY…LRTYTNARRK (178 aa)).

Belongs to the two pore domain potassium channel (TC 1.A.1.8) family. Expressed in ray A-type neurons and cell bodies. Also seen in head, pharyngeal and phasmid neurons, and in coelomocytes.

The protein localises to the membrane. Its function is as follows. Potassium channel protein that may be component of regulatory network that controls ray development and function. This is TWiK family of potassium channels protein 9 (twk-9) from Caenorhabditis elegans.